The following is a 623-amino-acid chain: V-type proton ATPase catalytic subunit A (623 aa).

252–259 (GAFGCGKT) is a binding site for ATP.

This sequence belongs to the ATPase alpha/beta chains family. In terms of assembly, V-ATPase is a heteromultimeric enzyme composed of a peripheral catalytic V1 complex (main components: subunits A, B, C, D, E, and F) attached to an integral membrane V0 proton pore complex (main component: the proteolipid protein).

The enzyme catalyses ATP + H2O + 4 H(+)(in) = ADP + phosphate + 5 H(+)(out). Its function is as follows. Catalytic subunit of the peripheral V1 complex of vacuolar ATPase. V-ATPase vacuolar ATPase is responsible for acidifying a variety of intracellular compartments in eukaryotic cells. This Brassica napus (Rape) protein is V-type proton ATPase catalytic subunit A.